Reading from the N-terminus, the 1475-residue chain is Gag-Pol polyprotein (1475 aa).

The segment covering 130–147 (TQNTQNKKQTSNQTNTQS) has biased composition (low complexity). The disordered stretch occupies residues 130 to 159 (TQNTQNKKQTSNQTNTQSLPAITTQDGTPR). 2 consecutive CCHC-type zinc fingers follow at residues 403–420 (RRCYGCGKTGHLKRNCKQ) and 421–438 (QKCYHCGKPGHQARNCRS). A Peptidase A2 domain is found at 492-565 (VKGLVDTGAD…TPVNLFGRSL (74 aa)). The active site involves Asp-497. The Reverse transcriptase domain maps to 619–806 (EGKISEAAWD…ERVKWIGFEL (188 aa)). Residues 999-1119 (RENLTTYYTD…ADEGVKKALE (121 aa)) enclose the RNase H type-1 domain. The segment at 1199-1240 (ENIPSATEDHERWHTSPDILVRQFHLPKRIAKEIVARCQECK) adopts an Integrase-type zinc-finger fold. His-1208, His-1212, Cys-1236, and Cys-1239 together coordinate Zn(2+). An Integrase catalytic domain is found at 1248–1400 (RGTNPRGRFL…TPYEIYLESE (153 aa)). Residues 1419–1465 (KWCYVRNRRKEWKGPYKVLWDGDGAAVIEEEGKTALYPHRHMRFIPP) constitute a DNA-binding region (integrase-type).

As to quaternary structure, interacts with host light chain cytoplasmic dynein DYNLL1; this interaction is critical for intracellular microtubule-dependent viral genome transport. Specific enzymatic cleavages by the viral protease yield mature proteins. The protease is released by autocatalytic cleavage. The polyprotein is cleaved during and after budding, this process is termed maturation.

The protein localises to the virion. The enzyme catalyses DNA(n) + a 2'-deoxyribonucleoside 5'-triphosphate = DNA(n+1) + diphosphate. It catalyses the reaction Endohydrolysis of RNA in RNA/DNA hybrids. Three different cleavage modes: 1. sequence-specific internal cleavage of RNA. Human immunodeficiency virus type 1 and Moloney murine leukemia virus enzymes prefer to cleave the RNA strand one nucleotide away from the RNA-DNA junction. 2. RNA 5'-end directed cleavage 13-19 nucleotides from the RNA end. 3. DNA 3'-end directed cleavage 15-20 nucleotides away from the primer terminus.. It carries out the reaction 3'-end directed exonucleolytic cleavage of viral RNA-DNA hybrid.. In terms of biological role, matrix protein p16 forms the outer shell of the core of the virus, lining the inner surface of the viral membrane. Its function is as follows. Capsid protein p26 forms the conical core of the virus that encapsulates the genomic RNA-nucleocapsid complex. Interaction between incoming particle-associated Gag proteins and host dynein allows intracellular microtubule-dependent virus transport toward the perinuclear region, prior to nucleus translocation and integration into host genome. Functionally, the aspartyl protease mediates proteolytic cleavages of Gag and Gag-Pol polyproteins during or shortly after the release of the virion from the plasma membrane. Cleavages take place as an ordered, step-wise cascade to yield mature proteins. This process is called maturation. Displays maximal activity during the budding process just prior to particle release from the cell. Reverse transcriptase/ribonuclease H (RT) is a multifunctional enzyme that converts the viral RNA genome into dsDNA in the cytoplasm, shortly after virus entry into the cell. This enzyme displays a DNA polymerase activity that can copy either DNA or RNA templates, and a ribonuclease H (RNase H) activity that cleaves the RNA strand of RNA-DNA heteroduplexes in a partially processive 3' to 5' endonucleasic mode. Conversion of viral genomic RNA into dsDNA requires many steps. A tRNA binds to the primer-binding site (PBS) situated at the 5'-end of the viral RNA. RT uses the 3' end of the tRNA primer to perform a short round of RNA-dependent minus-strand DNA synthesis. The reading proceeds through the U5 region and ends after the repeated (R) region which is present at both ends of viral RNA. The portion of the RNA-DNA heteroduplex is digested by the RNase H, resulting in a ssDNA product attached to the tRNA primer. This ssDNA/tRNA hybridizes with the identical R region situated at the 3' end of viral RNA. This template exchange, known as minus-strand DNA strong stop transfer, can be either intra- or intermolecular. RT uses the 3' end of this newly synthesized short ssDNA to perform the RNA-dependent minus-strand DNA synthesis of the whole template. RNase H digests the RNA template except for a polypurine tract (PPT) situated at the 5'-end of the genome. It is not clear if both polymerase and RNase H activities are simultaneous. RNase H probably can proceed both in a polymerase-dependent (RNA cut into small fragments by the same RT performing DNA synthesis) and a polymerase-independent mode (cleavage of remaining RNA fragments by free RTs). Secondly, RT performs DNA-directed plus-strand DNA synthesis using the PPT that has not been removed by RNase H as primer. PPT and tRNA primers are then removed by RNase H. The 3' and 5' ssDNA PBS regions hybridize to form a circular dsDNA intermediate. Strand displacement synthesis by RT to the PBS and PPT ends produces a blunt ended, linear dsDNA copy of the viral genome that includes long terminal repeats (LTRs) at both ends. In terms of biological role, integrase catalyzes viral DNA integration into the host chromosome, by performing a series of DNA cutting and joining reactions. This enzyme activity takes place after virion entry into a cell and reverse transcription of the RNA genome in dsDNA. The sequence is that of Gag-Pol polyprotein (gag-pol) from Bovine immunodeficiency virus (strain R29) (BIV).